The chain runs to 179 residues: Ubiquitin-conjugating enzyme E2 C (179 aa).

Ala-2 is modified (N-acetylalanine). A Phosphoserine modification is found at Ser-3. The UBC core domain occupies 30-175 (PVGKRLQQEL…LQETYSKQVS (146 aa)). Cys-114 serves as the catalytic Glycyl thioester intermediate.

The protein belongs to the ubiquitin-conjugating enzyme family. Component of the APC/C complex, composed of at least 14 distinct subunits that assemble into a complex of at least 19 chains with a combined molecular mass of around 1.2 MDa. Within this complex, directly interacts with ANAPC2. In terms of processing, autoubiquitinated by the APC/C complex, leading to its degradation by the proteasome. Its degradation plays a central role in APC/C regulation, allowing cyclin-A accumulation before S phase entry. APC/C substrates inhibit the autoubiquitination of UBE2C/UBCH10 but not its E2 function, hence APC/C remaining active until its substrates have been destroyed.

The enzyme catalyses S-ubiquitinyl-[E1 ubiquitin-activating enzyme]-L-cysteine + [E2 ubiquitin-conjugating enzyme]-L-cysteine = [E1 ubiquitin-activating enzyme]-L-cysteine + S-ubiquitinyl-[E2 ubiquitin-conjugating enzyme]-L-cysteine.. It catalyses the reaction S-ubiquitinyl-[E1 ubiquitin-activating enzyme]-L-cysteine + [acceptor protein]-L-lysine = [E1 ubiquitin-activating enzyme]-L-cysteine + N(6)-monoubiquitinyl-[acceptor protein]-L-lysine.. Its pathway is protein modification; protein ubiquitination. Its function is as follows. Accepts ubiquitin from the E1 complex and catalyzes its covalent attachment to other proteins. In vitro catalyzes 'Lys-11'- and 'Lys-48'-linked polyubiquitination. Acts as an essential factor of the anaphase promoting complex/cyclosome (APC/C), a cell cycle-regulated ubiquitin ligase that controls progression through mitosis. Acts by initiating 'Lys-11'-linked polyubiquitin chains on APC/C substrates, leading to the degradation of APC/C substrates by the proteasome and promoting mitotic exit. The protein is Ubiquitin-conjugating enzyme E2 C (Ube2c) of Mus musculus (Mouse).